Consider the following 177-residue polypeptide: Probable inosine/xanthosine triphosphatase (177 aa).

It belongs to the YjjX NTPase family. Homodimer. It depends on Mg(2+) as a cofactor. Requires Mn(2+) as cofactor.

It catalyses the reaction XTP + H2O = XDP + phosphate + H(+). The enzyme catalyses ITP + H2O = IDP + phosphate + H(+). Functionally, phosphatase that hydrolyzes non-canonical purine nucleotides such as XTP and ITP to their respective diphosphate derivatives. Probably excludes non-canonical purines from DNA/RNA precursor pool, thus preventing their incorporation into DNA/RNA and avoiding chromosomal lesions. In Halalkalibacterium halodurans (strain ATCC BAA-125 / DSM 18197 / FERM 7344 / JCM 9153 / C-125) (Bacillus halodurans), this protein is Probable inosine/xanthosine triphosphatase.